A 304-amino-acid polypeptide reads, in one-letter code: Homoserine O-succinyltransferase (304 aa).

Catalysis depends on cysteine 142, which acts as the Acyl-thioester intermediate. 2 residues coordinate substrate: lysine 163 and serine 192. Histidine 235 serves as the catalytic Proton acceptor. The active site involves glutamate 237. Arginine 249 contributes to the substrate binding site.

The protein belongs to the MetA family.

It localises to the cytoplasm. It catalyses the reaction L-homoserine + succinyl-CoA = O-succinyl-L-homoserine + CoA. Its pathway is amino-acid biosynthesis; L-methionine biosynthesis via de novo pathway; O-succinyl-L-homoserine from L-homoserine: step 1/1. Functionally, transfers a succinyl group from succinyl-CoA to L-homoserine, forming succinyl-L-homoserine. The protein is Homoserine O-succinyltransferase of Blochmanniella pennsylvanica (strain BPEN).